A 153-amino-acid polypeptide reads, in one-letter code: Holo-[acyl-carrier-protein] synthase (153 aa).

Residues D24 and E78 each contribute to the Mg(2+) site.

The protein belongs to the P-Pant transferase superfamily. AcpS family. It depends on Mg(2+) as a cofactor.

Its subcellular location is the cytoplasm. The enzyme catalyses apo-[ACP] + CoA = holo-[ACP] + adenosine 3',5'-bisphosphate + H(+). Transfers the 4'-phosphopantetheine moiety from coenzyme A to a Ser of acyl-carrier-protein. This is Holo-[acyl-carrier-protein] synthase from Bordetella pertussis (strain Tohama I / ATCC BAA-589 / NCTC 13251).